Here is a 334-residue protein sequence, read N- to C-terminus: Ornithine carbamoyltransferase (334 aa).

Carbamoyl phosphate contacts are provided by residues 56 to 59 (STRT), glutamine 83, arginine 107, and 134 to 137 (HPTQ). Residues asparagine 168, aspartate 232, and 236-237 (SM) contribute to the L-ornithine site. Carbamoyl phosphate is bound by residues 274–275 (CL) and arginine 320.

This sequence belongs to the aspartate/ornithine carbamoyltransferase superfamily. OTCase family. As to quaternary structure, homotrimer.

The protein localises to the cytoplasm. The enzyme catalyses carbamoyl phosphate + L-ornithine = L-citrulline + phosphate + H(+). Its pathway is amino-acid biosynthesis; L-arginine biosynthesis; L-arginine from L-ornithine and carbamoyl phosphate: step 1/3. Reversibly catalyzes the transfer of the carbamoyl group from carbamoyl phosphate (CP) to the N(epsilon) atom of ornithine (ORN) to produce L-citrulline. The protein is Ornithine carbamoyltransferase (argI) of Salmonella typhimurium (strain LT2 / SGSC1412 / ATCC 700720).